The sequence spans 55 residues: uncharacterized protein (55 aa).

A run of 2 helical transmembrane segments spans residues 5-25 (LISIVCIAVFFCLNILGMMHM) and 26-46 (LPLYITSPLLFLSILFTLYRL).

It is found in the cell membrane. This is an uncharacterized protein from Bacillus subtilis (strain 168).